The chain runs to 508 residues: Photosystem II CP47 reaction center protein (508 aa).

6 helical membrane passes run 21 to 36 (AVHI…WAGS), 101 to 115 (IVFS…IWHW), 140 to 156 (GIHL…FGAF), 203 to 218 (IAAG…FHLS), 237 to 252 (VLSS…AFVV), and 457 to 472 (SFAL…HGAR).

Belongs to the PsbB/PsbC family. PsbB subfamily. PSII is composed of 1 copy each of membrane proteins PsbA, PsbB, PsbC, PsbD, PsbE, PsbF, PsbH, PsbI, PsbJ, PsbK, PsbL, PsbM, PsbT, PsbX, PsbY, PsbZ, Psb30/Ycf12, at least 3 peripheral proteins of the oxygen-evolving complex and a large number of cofactors. It forms dimeric complexes. It depends on Binds multiple chlorophylls. PSII binds additional chlorophylls, carotenoids and specific lipids. as a cofactor.

The protein localises to the plastid. It localises to the chloroplast thylakoid membrane. One of the components of the core complex of photosystem II (PSII). It binds chlorophyll and helps catalyze the primary light-induced photochemical processes of PSII. PSII is a light-driven water:plastoquinone oxidoreductase, using light energy to abstract electrons from H(2)O, generating O(2) and a proton gradient subsequently used for ATP formation. This chain is Photosystem II CP47 reaction center protein, found in Buxus microphylla (Littleleaf boxwood).